Consider the following 201-residue polypeptide: NAD(P)H dehydrogenase (quinone) (201 aa).

The Flavodoxin-like domain occupies 4 to 191 (VLVLYYSMYG…KIAKCQGVHV (188 aa)). FMN-binding positions include 10–15 (SMYGHV) and 79–81 (TRF). Residue Tyr-12 participates in NAD(+) binding. Trp-99 is a binding site for substrate. FMN contacts are provided by residues 114–120 (STGTQHG) and His-135.

It belongs to the WrbA family. It depends on FMN as a cofactor.

It catalyses the reaction a quinone + NADH + H(+) = a quinol + NAD(+). It carries out the reaction a quinone + NADPH + H(+) = a quinol + NADP(+). This is NAD(P)H dehydrogenase (quinone) from Hydrogenovibrio crunogenus (strain DSM 25203 / XCL-2) (Thiomicrospira crunogena).